The primary structure comprises 225 residues: Histone H1.11L (225 aa).

Composition is skewed to low complexity over residues 1-23 (MSET…PAKA) and 31-43 (AAGG…PAGP). Disordered stretches follow at residues 1–46 (MSET…PSVT) and 94–225 (SKGT…AKKK). An N-acetylserine modification is found at S2. The H15 domain occupies 41–114 (AGPSVTELIT…GASGSFRLSK (74 aa)). Basic residues-rich tracts occupy residues 123-138 (APKK…KPAA), 146-163 (KKPK…KAKK), 171-189 (KSAK…KKAV), and 198-225 (KAVK…AKKK).

The protein belongs to the histone H1/H5 family.

It localises to the nucleus. Its subcellular location is the chromosome. Its function is as follows. Histones H1 are necessary for the condensation of nucleosome chains into higher-order structures. The chain is Histone H1.11L from Gallus gallus (Chicken).